The following is a 286-amino-acid chain: Quinone oxidoreductase 2 (286 aa).

Residues 6–11 (GATGQL), R33, 73–75 (SSS), 138–143 (GWYSEN), and R171 contribute to the NADP(+) site.

This sequence belongs to the NmrA-type oxidoreductase family. Monomer.

The enzyme catalyses a quinone + NADH + H(+) = a quinol + NAD(+). It catalyses the reaction a quinone + NADPH + H(+) = a quinol + NADP(+). Functionally, quinone oxidoreductase that may play some additional role beyond quinone reduction. Potential redox sensor protein. Overexpression induces retardation of growth. This chain is Quinone oxidoreductase 2 (qorB), found in Escherichia coli (strain K12).